The primary structure comprises 299 residues: Pyridoxal 5'-phosphate synthase subunit PdxS (299 aa).

Residue aspartate 24 participates in D-ribose 5-phosphate binding. The Schiff-base intermediate with D-ribose 5-phosphate role is filled by lysine 81. Glycine 153 is a D-ribose 5-phosphate binding site. Arginine 165 serves as a coordination point for D-glyceraldehyde 3-phosphate. D-ribose 5-phosphate-binding positions include glycine 219 and 240-241 (GS).

It belongs to the PdxS/SNZ family. In terms of assembly, in the presence of PdxT, forms a dodecamer of heterodimers.

The enzyme catalyses aldehydo-D-ribose 5-phosphate + D-glyceraldehyde 3-phosphate + L-glutamine = pyridoxal 5'-phosphate + L-glutamate + phosphate + 3 H2O + H(+). The protein operates within cofactor biosynthesis; pyridoxal 5'-phosphate biosynthesis. Its function is as follows. Catalyzes the formation of pyridoxal 5'-phosphate from ribose 5-phosphate (RBP), glyceraldehyde 3-phosphate (G3P) and ammonia. The ammonia is provided by the PdxT subunit. Can also use ribulose 5-phosphate and dihydroxyacetone phosphate as substrates, resulting from enzyme-catalyzed isomerization of RBP and G3P, respectively. This is Pyridoxal 5'-phosphate synthase subunit PdxS from Methanococcus maripaludis (strain C7 / ATCC BAA-1331).